The primary structure comprises 482 residues: tRNA sulfurtransferase (482 aa).

A THUMP domain is found at Leu-61–Arg-165. ATP contacts are provided by residues Leu-183 to Ile-184, Lys-265, Gly-287, and Gln-296. Cys-344 and Cys-456 form a disulfide bridge. The Rhodanese domain maps to Phe-404–Pro-482. The Cysteine persulfide intermediate role is filled by Cys-456.

The protein belongs to the ThiI family.

It localises to the cytoplasm. The catalysed reaction is [ThiI sulfur-carrier protein]-S-sulfanyl-L-cysteine + a uridine in tRNA + 2 reduced [2Fe-2S]-[ferredoxin] + ATP + H(+) = [ThiI sulfur-carrier protein]-L-cysteine + a 4-thiouridine in tRNA + 2 oxidized [2Fe-2S]-[ferredoxin] + AMP + diphosphate. The enzyme catalyses [ThiS sulfur-carrier protein]-C-terminal Gly-Gly-AMP + S-sulfanyl-L-cysteinyl-[cysteine desulfurase] + AH2 = [ThiS sulfur-carrier protein]-C-terminal-Gly-aminoethanethioate + L-cysteinyl-[cysteine desulfurase] + A + AMP + 2 H(+). It participates in cofactor biosynthesis; thiamine diphosphate biosynthesis. In terms of biological role, catalyzes the ATP-dependent transfer of a sulfur to tRNA to produce 4-thiouridine in position 8 of tRNAs, which functions as a near-UV photosensor. Also catalyzes the transfer of sulfur to the sulfur carrier protein ThiS, forming ThiS-thiocarboxylate. This is a step in the synthesis of thiazole, in the thiamine biosynthesis pathway. The sulfur is donated as persulfide by IscS. This is tRNA sulfurtransferase from Salmonella enteritidis PT4 (strain P125109).